The sequence spans 242 residues: Probable transcriptional regulatory protein EUBREC_1961 (242 aa).

It belongs to the TACO1 family.

Its subcellular location is the cytoplasm. This chain is Probable transcriptional regulatory protein EUBREC_1961, found in Agathobacter rectalis (strain ATCC 33656 / DSM 3377 / JCM 17463 / KCTC 5835 / VPI 0990) (Eubacterium rectale).